The following is a 1169-amino-acid chain: MTLRIVSGRSGTGKSVFIHQEIVEQLKSDPLGHPIFIIVPDQMSYSTEYELTNRHGLQGLIRAQVMTFKRLAWLVLQETGGIARKEVNGYGYRMLIRKLLEEQKSEFSLFRQAAGKRGFTEEIETLLKEFSRYSVNSSVLAEVKESLKAIDAPNTLQAKTNDLYVVLQALEERLGTTYVDSEGYYPILTEQLKYAETMKQATIYIDGFTAFTVRELELVRELLKVTKHVTVVLPFDHIDEAFDEQALFHEAALTNQRLHDIANEEGIDVEPPLHFYYTQRFQSEDLQHVEANFANMVPHTKKTSGDVMVFEASNRRAEVHAIAREITKLTREYGYRYQDIVLLYRQAELYDPLITSIFQQYEIPIFTNTKKTMLHHPLIELSRSALEIMTSNWKYEPVFRSVKTDLFFPLQAELTIWRERADRLENYCLAQGIYGERWFEEPRWFYKKYRGLEFHSRVQTDEERAMQAEIEAIRDEIRQPLKSLQDKLSIASTGKDIATALFELVESLQVYEKLQAMKDRELERGDALAASEHEQAWNEWINVLDQFVYMFGEQEMSVEEAAKILDEGFDTLEFSRIPPTLDEVMVATVDLARLSNIKVAFVLGMNDGVYPTRMEYEGLLSDTEREWFSQIGYELAPTSSNRLLQENFLFYRAASTPSNKLYLTYPTADEEGKALLSSLYIKKFIGNDKIAGLLSGVQAERVVMDPIELLDESALPYLRHPRTALAHLMVQLRQAEHSRELAPEWLALQKFYQQDPYWALIFDRVHYPITHKNEAEPLETYITQELYGQKLTSSVSRIEKYFRCPFSHFTTYGLRLEERAEYRLETFAMGDLFHEALKWITEETHRLQLSWIRLTKQQIKQLARQAVEQIVPVFSHQILLSSARYRYIQRKLIRIVERTMMALTQHANVSHFKPIAIEASFGPGQHEQLPPLEIDLTSGKKMFMRGRIDRIDSATIDDRSYLRIVDYKSSARDLDLNEVYYGLSLQVLTYLDVAMENSTYWLPGETEPAGVLYVHVHNPMLKLDKDMTDSEIEEDRLKQYKMKGLLSENAESILSMDEQLEESSGHSKIIPVYMKKDGTPSESQSRIVPVNDMKRLQHFVRRKHQEAGNGILSGDTAISPYKLKSKTACDYCQFAAVCQFDPSDGKQNYRQLMQAKPNEIVDKIRKEIE.

The UvrD-like helicase ATP-binding domain maps to 1–296 (MTLRIVSGRS…QHVEANFANM (296 aa)). 8–15 (GRSGTGKS) lines the ATP pocket. One can recognise a UvrD-like helicase C-terminal domain in the interval 276–582 (YYTQRFQSED…EFSRIPPTLD (307 aa)). The [4Fe-4S] cluster site is built by Cys-804, Cys-1129, Cys-1132, and Cys-1138.

It belongs to the helicase family. AddB/RexB type 1 subfamily. Heterodimer of AddA and AddB. Mg(2+) serves as cofactor. The cofactor is [4Fe-4S] cluster.

Functionally, the heterodimer acts as both an ATP-dependent DNA helicase and an ATP-dependent, dual-direction single-stranded exonuclease. Recognizes the chi site generating a DNA molecule suitable for the initiation of homologous recombination. The AddB subunit has 5' -&gt; 3' nuclease activity but not helicase activity. In Lysinibacillus sphaericus (strain C3-41), this protein is ATP-dependent helicase/deoxyribonuclease subunit B.